Consider the following 217-residue polypeptide: Thymidylate kinase (217 aa).

16–23 (GIDGAGKT) is a binding site for ATP.

Belongs to the thymidylate kinase family.

The catalysed reaction is dTMP + ATP = dTDP + ADP. In terms of biological role, phosphorylation of dTMP to form dTDP in both de novo and salvage pathways of dTTP synthesis. The polypeptide is Thymidylate kinase (Xylella fastidiosa (strain M23)).